Here is a 223-residue protein sequence, read N- to C-terminus: 7-cyano-7-deazaguanine synthase (223 aa).

12-22 (FSGGQDSTTCL) contacts ATP. The Zn(2+) site is built by Cys189, Cys198, Cys201, and Cys204.

The protein belongs to the QueC family. In terms of assembly, homodimer. It depends on Zn(2+) as a cofactor.

It catalyses the reaction 7-carboxy-7-deazaguanine + NH4(+) + ATP = 7-cyano-7-deazaguanine + ADP + phosphate + H2O + H(+). The protein operates within purine metabolism; 7-cyano-7-deazaguanine biosynthesis. Its function is as follows. Catalyzes the ATP-dependent conversion of 7-carboxy-7-deazaguanine (CDG) to 7-cyano-7-deazaguanine (preQ(0)). The sequence is that of 7-cyano-7-deazaguanine synthase from Halalkalibacterium halodurans (strain ATCC BAA-125 / DSM 18197 / FERM 7344 / JCM 9153 / C-125) (Bacillus halodurans).